A 166-amino-acid polypeptide reads, in one-letter code: NADH-quinone oxidoreductase subunit A (166 aa).

3 helical membrane passes run 16–36, 68–88, and 98–118; these read FAVFLIGAVGLCGLMLLGAYF, FYLVAMFFVIFDVEALYLYAW, and IGFIEAAIFILVLLAGLFYLV. Positions 141-166 are disordered; that stretch reads RYASSHPQDISQELSVAGSQQANESR.

This sequence belongs to the complex I subunit 3 family. In terms of assembly, NDH-1 is composed of 13 different subunits. Subunits NuoA, H, J, K, L, M, N constitute the membrane sector of the complex.

The protein localises to the cell inner membrane. It catalyses the reaction a quinone + NADH + 5 H(+)(in) = a quinol + NAD(+) + 4 H(+)(out). NDH-1 shuttles electrons from NADH, via FMN and iron-sulfur (Fe-S) centers, to quinones in the respiratory chain. The immediate electron acceptor for the enzyme in this species is believed to be ubiquinone. Couples the redox reaction to proton translocation (for every two electrons transferred, four hydrogen ions are translocated across the cytoplasmic membrane), and thus conserves the redox energy in a proton gradient. This chain is NADH-quinone oxidoreductase subunit A, found in Yersinia pseudotuberculosis serotype O:1b (strain IP 31758).